The chain runs to 277 residues: FGERPYWWVHETKFYGAGPAPSLQQFPITCETGPGSPSGHAMGAAGVWYVMVTALLSIAREKQCPPLLYRFLYIGLWMLMGLVELVVCISRVYMAAHFPHQVIAGIITGTLVAEVVSKEKWIYSASLKKYFLITLFLTSFAVGFYVLLKALDVDLLWTMEKAQKWCIRPEWVHLDSAPFASLLRNMGSLFGLGLGLHSPFYKTTKMRIMSAPLRIGCIVISVSLLHLLDGWTFSPENHMTFYALSFGKSAVALLIPTTLVPWALSKIYPVKTEGKNL.

R4 contacts substrate. The next 2 helical transmembrane spans lie at 39-59 (GHAMGAAGVWYVMVTALLSIA) and 67-87 (LLYRFLYIGLWMLMGLVELVV). The active-site Proton donor is H40. Residue R91 participates in substrate binding. The active-site Nucleophile is H97. The next 3 membrane-spanning stretches (helical) occupy residues 131–151 (FLITLFLTSFAVGFYVLLKAL), 215–235 (IGCIVISVSLLHLLDGWTFSP), and 250–270 (AVALLIPTTLVPWALSKIYPV). Positions 274–277 (GKNL) match the Prevents secretion from ER motif.

It belongs to the glucose-6-phosphatase family.

It localises to the endoplasmic reticulum membrane. It catalyses the reaction D-glucose 6-phosphate + H2O = D-glucose + phosphate. Its pathway is carbohydrate biosynthesis; gluconeogenesis. Its function is as follows. Hydrolyzes glucose-6-phosphate to glucose in the endoplasmic reticulum. Forms with the glucose-6-phosphate transporter (SLC37A4/G6PT) the complex responsible for glucose production in the terminal step of glycogenolysis and gluconeogenesis. Hence, it is the key enzyme in homeostatic regulation of blood glucose levels. The chain is Glucose-6-phosphatase catalytic subunit 1 (g6pc1) from Haplochromis xenognathus (Lake Victoria cichlid).